Consider the following 299-residue polypeptide: Ribosomal RNA small subunit methyltransferase H (299 aa).

S-adenosyl-L-methionine contacts are provided by residues G45–H47, D64, F92, D108, and Q115. Positions P275–Q299 are disordered. The segment covering P284–Q299 has biased composition (basic residues).

Belongs to the methyltransferase superfamily. RsmH family.

Its subcellular location is the cytoplasm. It carries out the reaction cytidine(1402) in 16S rRNA + S-adenosyl-L-methionine = N(4)-methylcytidine(1402) in 16S rRNA + S-adenosyl-L-homocysteine + H(+). Its function is as follows. Specifically methylates the N4 position of cytidine in position 1402 (C1402) of 16S rRNA. In Gloeothece citriformis (strain PCC 7424) (Cyanothece sp. (strain PCC 7424)), this protein is Ribosomal RNA small subunit methyltransferase H.